Consider the following 323-residue polypeptide: Transmembrane protein 171 (323 aa).

Helical transmembrane passes span 22–42, 57–77, 112–132, and 159–179; these read IFFLFVFGAVLLCVGVLISIF, MVLKIAGPSCAVMGLGTVILA, LIFGFLFLTSGMLISILGIWV, and FLSLQIMGPLIVLVGLCFFVV. Residues 251–268 show a composition bias toward polar residues; sequence YSSLFNLSRTPTPENQGA. The disordered stretch occupies residues 251–323; sequence YSSLFNLSRT…LGAPSESSPP (73 aa). Residues 281–290 are compositionally biased toward low complexity; the sequence is SGPGSSSESS.

Its subcellular location is the membrane. In Rattus norvegicus (Rat), this protein is Transmembrane protein 171 (Tmem171).